An 866-amino-acid chain; its full sequence is Pentatricopeptide repeat-containing protein At1g15510, chloroplastic (866 aa).

The N-terminal 52 residues, 1 to 52, are a transit peptide targeting the chloroplast; that stretch reads MASSAQSPHFYLNPGKSNSFQSKAYKQRNVNFYWNFGIRRLFLRKSQGLSVL. PPR repeat units follow at residues 58–92, 93–123, 128–158, 159–194, 195–229, 230–260, 261–295, 296–330, 331–365, 366–396, 397–431, 432–466, 467–493, 497–531, 532–561, 562–596, 597–631, and 632–662; these read STHF…RVAV, DEDV…ALSS, GVEL…MSER, NLFS…GVKP, DVYT…GYEL, DIDV…MPRR, DIIS…SVDP, DLMT…GFAV, DISV…DIVS, WTTM…SVKP, DEIT…RLIS, YVIV…NVIS, WTSI…MKMT, NAIT…GVGL, DDFL…SQKK, DVTS…RVRP, DEIT…GVTP, and NLKH…MPVT. Residues 667 to 742 are type E motif; the sequence is VWGALLNACR…DAGCSWVEVK (76 aa). The tract at residues 743 to 773 is type E(+) motif; sequence GKVHAFLSDDKYHPQTKEINTVLEGFYEKMS. A type DYW motif region spans residues 774-866; the sequence is EVGLTKISES…FKDGECSCGD (93 aa).

The protein belongs to the PPR family. PCMP-H subfamily.

It is found in the plastid. The protein resides in the chloroplast. Functionally, regulates the RNA editing of the chloroplast transcript accD, and is essential for the early stages of chloroplast biogenesis. Required for the RNA editing of the chloroplast transcript ndhF. This chain is Pentatricopeptide repeat-containing protein At1g15510, chloroplastic (PCMP-H73), found in Arabidopsis thaliana (Mouse-ear cress).